We begin with the raw amino-acid sequence, 169 residues long: uncharacterized protein (169 aa).

The residue at position 165 (Ser165) is a Phosphoserine.

This is an uncharacterized protein from Drosophila melanogaster (Fruit fly).